A 139-amino-acid chain; its full sequence is Large ribosomal subunit protein uL16c (139 aa).

Residues 1–17 (MLSPKKTKFRKQHRGRM) are compositionally biased toward basic residues. Residues 1 to 23 (MLSPKKTKFRKQHRGRMKGSASK) are disordered.

It belongs to the universal ribosomal protein uL16 family. In terms of assembly, part of the 50S ribosomal subunit.

The protein resides in the plastid. Its subcellular location is the chloroplast. In Porphyra purpurea (Red seaweed), this protein is Large ribosomal subunit protein uL16c.